The following is a 276-amino-acid chain: Undecaprenyl-diphosphatase 1 (276 aa).

5 consecutive transmembrane segments (helical) span residues 83–103, 108–128, 187–207, 217–237, and 252–272; these read FTLN…LFEK, VLFS…IILW, VATE…TLYE, VDSL…AFVC, and VFAW…YSGW.

It belongs to the UppP family.

The protein resides in the cell inner membrane. The catalysed reaction is di-trans,octa-cis-undecaprenyl diphosphate + H2O = di-trans,octa-cis-undecaprenyl phosphate + phosphate + H(+). Functionally, catalyzes the dephosphorylation of undecaprenyl diphosphate (UPP). Confers resistance to bacitracin. This chain is Undecaprenyl-diphosphatase 1, found in Burkholderia cenocepacia (strain HI2424).